Reading from the N-terminus, the 396-residue chain is Elongation factor Tu (396 aa).

The region spanning 10–206 (KPHVNIGTIG…AVDESVPEPV (197 aa)) is the tr-type G domain. Residues 19–26 (GHVDHGKT) are G1. 19 to 26 (GHVDHGKT) is a binding site for GTP. Threonine 26 contributes to the Mg(2+) binding site. Positions 62 to 66 (GITIN) are G2. Positions 83–86 (DAPG) are G3. GTP-binding positions include 83–87 (DAPGH) and 138–141 (NKSD). The segment at 138–141 (NKSD) is G4. The G5 stretch occupies residues 176–178 (SGL).

This sequence belongs to the TRAFAC class translation factor GTPase superfamily. Classic translation factor GTPase family. EF-Tu/EF-1A subfamily. As to quaternary structure, monomer.

Its subcellular location is the cytoplasm. It carries out the reaction GTP + H2O = GDP + phosphate + H(+). Its function is as follows. GTP hydrolase that promotes the GTP-dependent binding of aminoacyl-tRNA to the A-site of ribosomes during protein biosynthesis. The sequence is that of Elongation factor Tu from Beutenbergia cavernae (strain ATCC BAA-8 / DSM 12333 / CCUG 43141 / JCM 11478 / NBRC 16432 / NCIMB 13614 / HKI 0122).